The primary structure comprises 585 residues: Proline--tRNA ligase (585 aa).

This sequence belongs to the class-II aminoacyl-tRNA synthetase family. ProS type 1 subfamily. As to quaternary structure, homodimer.

It localises to the cytoplasm. It catalyses the reaction tRNA(Pro) + L-proline + ATP = L-prolyl-tRNA(Pro) + AMP + diphosphate. Functionally, catalyzes the attachment of proline to tRNA(Pro) in a two-step reaction: proline is first activated by ATP to form Pro-AMP and then transferred to the acceptor end of tRNA(Pro). As ProRS can inadvertently accommodate and process non-cognate amino acids such as alanine and cysteine, to avoid such errors it has two additional distinct editing activities against alanine. One activity is designated as 'pretransfer' editing and involves the tRNA(Pro)-independent hydrolysis of activated Ala-AMP. The other activity is designated 'posttransfer' editing and involves deacylation of mischarged Ala-tRNA(Pro). The misacylated Cys-tRNA(Pro) is not edited by ProRS. The chain is Proline--tRNA ligase from Mycolicibacterium vanbaalenii (strain DSM 7251 / JCM 13017 / BCRC 16820 / KCTC 9966 / NRRL B-24157 / PYR-1) (Mycobacterium vanbaalenii).